We begin with the raw amino-acid sequence, 490 residues long: Transcription factor MYB101 (490 aa).

The tract at residues 1 to 21 (MDGGGETTATATMEGRGLKKG) is disordered. HTH myb-type domains follow at residues 15 to 67 (GRGL…ANHL) and 68 to 122 (RPNL…KRRQ). DNA-binding regions (H-T-H motif) lie at residues 43-67 (WNAVQKNSGLLRCGKSCRLRWANHL) and 95-118 (WARMASQLPGRTDNEIKNYWNTRM). The segment at 168–206 (YTNSSNTSSSSSSFSSSSSQPSKRLRPDPLVSTNPGLNP) is disordered. Low complexity predominate over residues 169–186 (TNSSNTSSSSSSFSSSSS).

As to expression, present mostly in flowers, siliques and floral shoot tips. Expression is restricted to the subapical pith cells of both vegetative and flowering plants and to the hypocotyl hook. Expressed in pollen grains and pollen tube. Mostly expressed in mature pollen grains, and, to a lower extent, in inflorescences and siliques.

The protein resides in the nucleus. Transcription activator. Binds to 5'-CAACTGTC-3' and/or 5'-TAACAAA-3' motif in target gene promoter (e.g. alpha-amylase) to promote their expression. Positive regulator of abscisic acid (ABA) responses leading to growth arrest during seed germination. Promotes the expression of aleurone-related genes (e.g. CP1, CP, GASA1, BXL1 and BXL2) in seeds. Together with MYB33 and MYB65, promotes the programmed cell death (PCD) leading to vacuolation of protein storage vacuoles (PSVs) in the aleurone layers during seed germination. Maybe involved in the regulation of leaves lamina morphogenesis. Involved in pollen grain development. Together with MYB97 and MYB120, functions as a male factor that controls pollen tube-synergid interaction in fertilization. Required for pollen tube growth arrest and sperm cell release in the female gametophyte, probably via the regulation of pollen tube-specific gene expression. The chain is Transcription factor MYB101 from Arabidopsis thaliana (Mouse-ear cress).